Consider the following 689-residue polypeptide: uncharacterized protein (689 aa).

S566 serves as a coordination point for substrate. Y579 serves as the catalytic Proton acceptor.

Belongs to the short-chain dehydrogenases/reductases (SDR) family.

This is an uncharacterized protein from Bacillus subtilis (strain 168).